The following is a 152-amino-acid chain: Ubiquitin-conjugating enzyme E2 2 (152 aa).

The UBC core domain maps to 4–150 (PARKRLMRDF…VREVVEQSWT (147 aa)). Cys-88 (glycyl thioester intermediate) is an active-site residue.

This sequence belongs to the ubiquitin-conjugating enzyme family. Expressed in all tissues examined. Lower levels found in leaves.

It carries out the reaction S-ubiquitinyl-[E1 ubiquitin-activating enzyme]-L-cysteine + [E2 ubiquitin-conjugating enzyme]-L-cysteine = [E1 ubiquitin-activating enzyme]-L-cysteine + S-ubiquitinyl-[E2 ubiquitin-conjugating enzyme]-L-cysteine.. The protein operates within protein modification; protein ubiquitination. Accepts the ubiquitin from the E1 complex and catalyzes its covalent attachment to other proteins. This Arabidopsis thaliana (Mouse-ear cress) protein is Ubiquitin-conjugating enzyme E2 2 (UBC2).